We begin with the raw amino-acid sequence, 487 residues long: Protein nucleotidyltransferase YdiU (487 aa).

Residues glycine 90, glycine 92, arginine 93, lysine 113, aspartate 125, glycine 126, arginine 176, and arginine 183 each coordinate ATP. Catalysis depends on aspartate 252, which acts as the Proton acceptor. Asparagine 253 and aspartate 262 together coordinate Mg(2+). Aspartate 262 contributes to the ATP binding site.

This sequence belongs to the SELO family. Mg(2+) serves as cofactor. The cofactor is Mn(2+).

The enzyme catalyses L-seryl-[protein] + ATP = 3-O-(5'-adenylyl)-L-seryl-[protein] + diphosphate. The catalysed reaction is L-threonyl-[protein] + ATP = 3-O-(5'-adenylyl)-L-threonyl-[protein] + diphosphate. It catalyses the reaction L-tyrosyl-[protein] + ATP = O-(5'-adenylyl)-L-tyrosyl-[protein] + diphosphate. It carries out the reaction L-histidyl-[protein] + UTP = N(tele)-(5'-uridylyl)-L-histidyl-[protein] + diphosphate. The enzyme catalyses L-seryl-[protein] + UTP = O-(5'-uridylyl)-L-seryl-[protein] + diphosphate. The catalysed reaction is L-tyrosyl-[protein] + UTP = O-(5'-uridylyl)-L-tyrosyl-[protein] + diphosphate. Nucleotidyltransferase involved in the post-translational modification of proteins. It can catalyze the addition of adenosine monophosphate (AMP) or uridine monophosphate (UMP) to a protein, resulting in modifications known as AMPylation and UMPylation. The protein is Protein nucleotidyltransferase YdiU of Pseudomonas syringae pv. tomato (strain ATCC BAA-871 / DC3000).